Reading from the N-terminus, the 260-residue chain is Phosphate import ATP-binding protein PstB 5 (260 aa).

One can recognise an ABC transporter domain in the interval 9-255 (IKVKDLSFYY…PLDSRTRDYV (247 aa)). 41-48 (GPSGCGKS) is an ATP binding site.

Belongs to the ABC transporter superfamily. Phosphate importer (TC 3.A.1.7) family. The complex is composed of two ATP-binding proteins (PstB), two transmembrane proteins (PstC and PstA) and a solute-binding protein (PstS).

Its subcellular location is the cell inner membrane. The catalysed reaction is phosphate(out) + ATP + H2O = ADP + 2 phosphate(in) + H(+). In terms of biological role, part of the ABC transporter complex PstSACB involved in phosphate import. Responsible for energy coupling to the transport system. In Trichormus variabilis (strain ATCC 29413 / PCC 7937) (Anabaena variabilis), this protein is Phosphate import ATP-binding protein PstB 5.